Here is a 283-residue protein sequence, read N- to C-terminus: Bifunctional protein FolD (283 aa).

NADP(+) is bound by residues 157–159 (GNG) and Ile-224.

It belongs to the tetrahydrofolate dehydrogenase/cyclohydrolase family. Homodimer.

It carries out the reaction (6R)-5,10-methylene-5,6,7,8-tetrahydrofolate + NADP(+) = (6R)-5,10-methenyltetrahydrofolate + NADPH. The enzyme catalyses (6R)-5,10-methenyltetrahydrofolate + H2O = (6R)-10-formyltetrahydrofolate + H(+). The protein operates within one-carbon metabolism; tetrahydrofolate interconversion. Its function is as follows. Catalyzes the oxidation of 5,10-methylenetetrahydrofolate to 5,10-methenyltetrahydrofolate and then the hydrolysis of 5,10-methenyltetrahydrofolate to 10-formyltetrahydrofolate. This Mycoplasmoides gallisepticum (strain R(low / passage 15 / clone 2)) (Mycoplasma gallisepticum) protein is Bifunctional protein FolD.